Consider the following 482-residue polypeptide: tRNA sulfurtransferase (482 aa).

Residues 61–165 (LTIRDALTRI…DDRLLLIKGR (105 aa)) enclose the THUMP domain. ATP-binding positions include 183-184 (LI), Lys265, Gly287, and Gln296. Cys344 and Cys456 are disulfide-bonded. The Rhodanese domain maps to 404-482 (FGPNDVILDI…GFKNVKVYRP (79 aa)). The active-site Cysteine persulfide intermediate is the Cys456.

Belongs to the ThiI family. Interacts with IscS.

Its subcellular location is the cytoplasm. The catalysed reaction is [ThiI sulfur-carrier protein]-S-sulfanyl-L-cysteine + a uridine in tRNA + 2 reduced [2Fe-2S]-[ferredoxin] + ATP + H(+) = [ThiI sulfur-carrier protein]-L-cysteine + a 4-thiouridine in tRNA + 2 oxidized [2Fe-2S]-[ferredoxin] + AMP + diphosphate. The enzyme catalyses [ThiS sulfur-carrier protein]-C-terminal Gly-Gly-AMP + S-sulfanyl-L-cysteinyl-[cysteine desulfurase] + AH2 = [ThiS sulfur-carrier protein]-C-terminal-Gly-aminoethanethioate + L-cysteinyl-[cysteine desulfurase] + A + AMP + 2 H(+). Its pathway is cofactor biosynthesis; thiamine diphosphate biosynthesis. Catalyzes the ATP-dependent transfer of a sulfur to tRNA to produce 4-thiouridine in position 8 of tRNAs, which functions as a near-UV photosensor. Also catalyzes the transfer of sulfur to the sulfur carrier protein ThiS, forming ThiS-thiocarboxylate. This is a step in the synthesis of thiazole, in the thiamine biosynthesis pathway. The sulfur is donated as persulfide by IscS. The polypeptide is tRNA sulfurtransferase (Escherichia coli O157:H7).